The following is a 120-amino-acid chain: Chaperonin GroEL (120 aa).

23 to 27 (DGTTT) serves as a coordination point for ATP.

This sequence belongs to the chaperonin (HSP60) family. In terms of assembly, forms a cylinder of 14 subunits composed of two heptameric rings stacked back-to-back. Interacts with the co-chaperonin GroES.

Its subcellular location is the cytoplasm. It carries out the reaction ATP + H2O + a folded polypeptide = ADP + phosphate + an unfolded polypeptide.. Together with its co-chaperonin GroES, plays an essential role in assisting protein folding. The GroEL-GroES system forms a nano-cage that allows encapsulation of the non-native substrate proteins and provides a physical environment optimized to promote and accelerate protein folding. This chain is Chaperonin GroEL, found in Mycobacterium gordonae.